The following is a 480-amino-acid chain: Glutamate--tRNA ligase (480 aa).

A 'HIGH' region motif is present at residues Pro-21–Gly-31. Zn(2+) contacts are provided by Cys-110, Cys-112, Cys-137, and His-139. The 'KMSKS' region signature appears at Lys-248–Arg-252. Lys-251 provides a ligand contact to ATP.

Belongs to the class-I aminoacyl-tRNA synthetase family. Glutamate--tRNA ligase type 1 subfamily. Monomer. It depends on Zn(2+) as a cofactor.

The protein resides in the cytoplasm. The enzyme catalyses tRNA(Glu) + L-glutamate + ATP = L-glutamyl-tRNA(Glu) + AMP + diphosphate. Catalyzes the attachment of glutamate to tRNA(Glu) in a two-step reaction: glutamate is first activated by ATP to form Glu-AMP and then transferred to the acceptor end of tRNA(Glu). This is Glutamate--tRNA ligase from Haemophilus influenzae (strain PittEE).